We begin with the raw amino-acid sequence, 671 residues long: APC membrane recruitment protein 2 (671 aa).

Disordered regions lie at residues 1–24 (METSRSRGGGGAVSERGGAGASVG), 76–358 (SGGT…SDPS), 391–414 (EAGPSCDKHVPGPGKPALSKKNPG), and 444–598 (SQTE…PLRT). 2 stretches are compositionally biased toward gly residues: residues 7-21 (RGGGGAVSERGGAGA) and 126-137 (GGDSGGGGGGRP). A Phosphoserine modification is found at Ser-162. Positions 171-182 (GRSENGKGEPVD) are enriched in basic and acidic residues. Phosphoserine is present on residues Ser-229 and Ser-233. Basic and acidic residues-rich tracts occupy residues 236–260 (CVKEETPRAAREPEEPSQDAPRDPA), 276–286 (APARSCREAEG), and 295–307 (ARGEDAAGHRRAE). The span at 342–353 (APAAPDPASVDP) shows a compositional bias: low complexity. Ser-355 and Ser-358 each carry phosphoserine. Low complexity predominate over residues 447 to 458 (EEQGPEPQEGAA). Composition is skewed to basic and acidic residues over residues 472 to 487 (TPKDTRCVEAAKDASS) and 498 to 514 (IEPHPKEEPKHPEKEQQ).

Belongs to the Amer family. As to quaternary structure, interacts with APC.

It localises to the cell membrane. Negative regulator of the canonical Wnt signaling pathway involved in neuroectodermal patterning. Acts by specifically binding phosphatidylinositol 4,5-bisphosphate (PtdIns(4,5)P2), translocating to the cell membrane and interacting with key regulators of the canonical Wnt signaling pathway, such as components of the beta-catenin destruction complex. The protein is APC membrane recruitment protein 2 (AMER2) of Homo sapiens (Human).